A 176-amino-acid polypeptide reads, in one-letter code: Isopentenyl-diphosphate Delta-isomerase (176 aa).

Mn(2+) contacts are provided by His-22 and His-28. The Nudix hydrolase domain occupies 26–160 (LRHKAISVFI…PETFTPWLHI (135 aa)). Cys-62 is a catalytic residue. His-64 lines the Mn(2+) pocket. Residue Glu-82 coordinates Mg(2+). Mn(2+)-binding residues include Glu-108 and Glu-110. Residue Glu-110 is part of the active site.

This sequence belongs to the IPP isomerase type 1 family. Requires Mg(2+) as cofactor. It depends on Mn(2+) as a cofactor.

Its subcellular location is the cytoplasm. The catalysed reaction is isopentenyl diphosphate = dimethylallyl diphosphate. The protein operates within isoprenoid biosynthesis; dimethylallyl diphosphate biosynthesis; dimethylallyl diphosphate from isopentenyl diphosphate: step 1/1. It functions in the pathway porphyrin-containing compound metabolism; chlorophyll biosynthesis. Functionally, catalyzes the 1,3-allylic rearrangement of the homoallylic substrate isopentenyl (IPP) to its highly electrophilic allylic isomer, dimethylallyl diphosphate (DMAPP). The polypeptide is Isopentenyl-diphosphate Delta-isomerase (Jannaschia sp. (strain CCS1)).